A 416-amino-acid polypeptide reads, in one-letter code: Homogentisate 1,2-dioxygenase (416 aa).

His-275 serves as the catalytic Proton acceptor. The Fe cation site is built by His-318 and Glu-324. Tyr-333 and His-354 together coordinate homogentisate. A Fe cation-binding site is contributed by His-354.

The protein belongs to the homogentisate dioxygenase family. As to quaternary structure, hexamer; dimer of trimers. The cofactor is Fe cation.

It carries out the reaction homogentisate + O2 = 4-maleylacetoacetate + H(+). The protein operates within amino-acid degradation; L-phenylalanine degradation; acetoacetate and fumarate from L-phenylalanine: step 4/6. Functionally, involved in the catabolism of homogentisate (2,5-dihydroxyphenylacetate or 2,5-OH-PhAc), a central intermediate in the degradation of phenylalanine and tyrosine. Catalyzes the oxidative ring cleavage of the aromatic ring of homogentisate to yield maleylacetoacetate. In Legionella pneumophila subsp. pneumophila (strain Philadelphia 1 / ATCC 33152 / DSM 7513), this protein is Homogentisate 1,2-dioxygenase.